Consider the following 348-residue polypeptide: Serpentine receptor class alpha-29 (348 aa).

A run of 6 helical transmembrane segments spans residues 28–48 (FILM…QTLW), 108–130 (FLYY…DRLF), 145–165 (GFIV…FWTF), 193–213 (INDS…FLYI), 246–266 (CIII…PSIF), and 280–300 (LILA…LIVI).

The protein belongs to the nematode receptor-like protein sra family.

It is found in the membrane. The protein is Serpentine receptor class alpha-29 (sra-29) of Caenorhabditis elegans.